The following is a 1663-amino-acid chain: Cortactin-binding protein 2 (1663 aa).

Disordered stretches follow at residues 1-23 (MATD…AGAA), 203-222 (KKKT…RSTE), 358-440 (RQAS…LHPG), 454-479 (GNAN…PTSR), and 498-616 (RFTS…PKPS). The stretch at 119 to 276 (KKMQERMSAQ…EQLKRGSDSK (158 aa)) forms a coiled coil. Low complexity predominate over residues 386–396 (PSTDSTPDPTS). A compositionally biased stretch (polar residues) spans 411-422 (QTPGIAPQNSQA). Residue Arg-498 is modified to Asymmetric dimethylarginine. Positions 583 to 597 (TVASPPSSLPQGNRV) are enriched in polar residues. 6 ANK repeats span residues 709-739 (GRPT…DINY), 743-772 (DGHS…QINA), 776-805 (NGFT…NINH), 809-838 (GGQT…NRSV), 842-871 (DGWT…PACG), and 912-942 (EGWT…EPER). The interval 1447–1477 (KKKGESGAWRKVNTSPRRKSGRFSLPTWNKP) is disordered. Ser-1524 is subject to Phosphoserine. Disordered regions lie at residues 1581–1602 (QKEV…KSKT) and 1618–1663 (SKVT…KHNK). The span at 1582 to 1599 (KEVSPLSSHQTTECSNSK) shows a compositional bias: polar residues. Positions 1624–1638 (SQNTKRSSSSSNTRQ) are enriched in low complexity. Basic and acidic residues predominate over residues 1645-1663 (SKEENWNLHKNEHLDKHNK).

Interacts with CTTN/cortactin SH3 domain. Interacts with STRN, STRN4/zinedin and MOB4/phocein; this interactions mediate the association with the STRIPAK core complex and may regulate dendritic spine distribution of the STRIPAK complex in hippocampal neurons. Activation of glutamate receptors weakens the interaction with STRN and STRN4.

It is found in the cytoplasm. The protein resides in the cell cortex. The protein localises to the cell projection. Its subcellular location is the dendritic spine. Its function is as follows. Regulates the dendritic spine distribution of CTTN/cortactin in hippocampal neurons, and thus controls dendritic spinogenesis and dendritic spine maintenance. Associates with the striatin-interacting phosphatase and kinase (STRIPAK) core complex to regulate dendritic spine distribution of the STRIPAK complex in hippocampal neurons. This is Cortactin-binding protein 2 (CTTNBP2) from Papio anubis (Olive baboon).